The sequence spans 453 residues: Midnolin-A (453 aa).

In terms of domain architecture, Ubiquitin-like spans 20–94; sequence MNLNIQSTTG…LTLLPSVEAG (75 aa). Disordered stretches follow at residues 184–219, 232–256, 333–376, and 390–429; these read SHLA…TTSV, CAEQ…RSRK, RNAK…ENRA, and QKRL…EGSL. The segment covering 206–219 has biased composition (polar residues); the sequence is HCNGPHSSPLTTSV. Low complexity-rich tracts occupy residues 239–252 and 338–351; these read STRG…SPSS and TSPQ…TTHP. A compositionally biased stretch (basic and acidic residues) spans 365 to 376; sequence SGDRLRQTENRA. A compositionally biased stretch (basic residues) spans 390–399; it reads QKRLRRKARR. The span at 415–428 shows a compositional bias: low complexity; it reads RTSSNSSTSSGEGS.

It is found in the nucleus. The protein resides in the cytoplasm. Its subcellular location is the cytosol. The protein localises to the nucleolus. Its function is as follows. Facilitates ubiquitin-independent proteasomal degradation of polycomb protein CBX4. Plays a role in inhibiting the activity of glucokinase GCK and both glucose-induced and basal insulin secretion. This chain is Midnolin-A (midn-a), found in Xenopus laevis (African clawed frog).